The primary structure comprises 383 residues: Anhydro-N-acetylmuramic acid kinase (383 aa).

9–16 serves as a coordination point for ATP; that stretch reads GTSLDGID.

The protein belongs to the anhydro-N-acetylmuramic acid kinase family.

The catalysed reaction is 1,6-anhydro-N-acetyl-beta-muramate + ATP + H2O = N-acetyl-D-muramate 6-phosphate + ADP + H(+). The protein operates within amino-sugar metabolism; 1,6-anhydro-N-acetylmuramate degradation. Its pathway is cell wall biogenesis; peptidoglycan recycling. Its function is as follows. Catalyzes the specific phosphorylation of 1,6-anhydro-N-acetylmuramic acid (anhMurNAc) with the simultaneous cleavage of the 1,6-anhydro ring, generating MurNAc-6-P. Is required for the utilization of anhMurNAc either imported from the medium or derived from its own cell wall murein, and thus plays a role in cell wall recycling. The chain is Anhydro-N-acetylmuramic acid kinase from Bacillus cereus (strain ATCC 10987 / NRS 248).